The following is a 136-amino-acid chain: MTSLTRPRVEFISTILQTVLNMGLLSLGLILVVFLGKETVHLADVLFAPEQTSKYELVEGLVVYFLYFEFIALIVKYFQSGFHFPLRYFVYIGITAIVRLIIVDHKSPLDVLIYSAAILLLVITLWLCNSKRLKRE.

Transmembrane regions (helical) follow at residues 15-35, 55-75, 82-102, and 108-128; these read ILQT…VVFL, YELV…ALIV, FHFP…RLII, and PLDV…LWLC.

Belongs to the PsiE family.

The protein resides in the cell inner membrane. The sequence is that of Protein PsiE homolog from Enterobacter sp. (strain 638).